A 379-amino-acid polypeptide reads, in one-letter code: Alanine racemase (379 aa).

Lys41 serves as the catalytic Proton acceptor; specific for D-alanine. Lys41 carries the N6-(pyridoxal phosphate)lysine modification. Arg138 is a binding site for substrate. The Proton acceptor; specific for L-alanine role is filled by Tyr260. Met319 contributes to the substrate binding site.

The protein belongs to the alanine racemase family. Requires pyridoxal 5'-phosphate as cofactor.

The enzyme catalyses L-alanine = D-alanine. It participates in amino-acid biosynthesis; D-alanine biosynthesis; D-alanine from L-alanine: step 1/1. Functionally, catalyzes the interconversion of L-alanine and D-alanine. May also act on other amino acids. The sequence is that of Alanine racemase (alr) from Rhizobium meliloti (strain 1021) (Ensifer meliloti).